A 370-amino-acid chain; its full sequence is ADP-ribosylation factor-like protein 13B (370 aa).

4 S-palmitoyl cysteine lipidation sites follow: Cys-12, Cys-13, Cys-14, and Cys-15. Residues 31–38, 75–79, and 134–137 each bind GTP; these read GIGSAGKT, DVGGD, and NNQN. Lys-239 participates in a covalent cross-link: Glycyl lysine isopeptide (Lys-Gly) (interchain with G-Cter in SUMO). Residues 255 to 331 form a disordered region; that stretch reads RNQPPVQPPI…PVSPESNSVK (77 aa). The span at 259–271 shows a compositional bias: pro residues; it reads PVQPPIPPDPPSD. Polar residues-rich tracts occupy residues 287–303 and 314–328; these read LASS…TPET and RISQ…PESN. Lys-331 is covalently cross-linked (Glycyl lysine isopeptide (Lys-Gly) (interchain with G-Cter in SUMO)). Residues 366-369 form an RVVP region region; sequence RVVP.

This sequence belongs to the small GTPase superfamily. Arf family. As to quaternary structure, monomer. Sumoylation regulates the targeting of membrane sensory receptors to the cilium. As to expression, specifically expressed in ciliated sensory neurons throughout development in both hermaphrodites.

The protein localises to the cell projection. The protein resides in the cilium membrane. Its function is as follows. Cilium-specific protein required to control the microtubule-based, ciliary axoneme structure. Required for normal sensory cilium function. May act by maintaining the association between IFT subcomplexes A and B. This is ADP-ribosylation factor-like protein 13B (arl-13) from Caenorhabditis elegans.